The following is a 165-amino-acid chain: Adenosine 5'-monophosphoramidase HINT3 (165 aa).

Residues 1–23 (MAEKQAGLVGEPDPEGSSPGTSE) are disordered. Ala2 carries the N-acetylalanine modification. Residues 32-143 (VFCRVAAGQE…PVKEFGFLSK (112 aa)) enclose the HIT domain. Residues 59–60 (DI) and 128–130 (HLH) contribute to the AMP site. The short motif at 126–130 (HLHLH) is the Histidine triad motif element. Residue His128 is the Tele-AMP-histidine intermediate of the active site.

The protein belongs to the HINT family. As to quaternary structure, forms dimers to octamers and even larger oligomer. Interacts with CALM1.

The protein resides in the cytoplasm. It is found in the nucleus. The catalysed reaction is adenosine 5'-phosphoramidate + H2O = AMP + NH4(+). Functionally, exhibits adenosine 5'-monophosphoramidase activity, hydrolyzing purine nucleotide phosphoramidates with a single phosphate group such as adenosine 5'monophosphoramidate (AMP-NH2) to yield AMP and NH2. Hydrolyzes lysyl-AMP (AMP-N-epsilon-(N-alpha-acetyl lysine methyl ester)) generated by lysine tRNA ligase. This is Adenosine 5'-monophosphoramidase HINT3 (Hint3) from Mus musculus (Mouse).